Here is an 80-residue protein sequence, read N- to C-terminus: MTQKTPGEIRAEAEAALKPLGQQRINVLAELDEIEKDVRPLIAEAVRMEVPYRRINEVTAVAPNTARAWAKAEAEKGSGS.

DNA-binding regions (H-T-H motif) lie at residues Ala-13–Asp-32 and Asn-56–Glu-75.

Functionally, repressor for the transcription of certain pIJ101 promoters, including those the from kilA and kilB loci. The sequence is that of Protein KorB (korB) from Streptomyces lividans.